A 130-amino-acid chain; its full sequence is S-adenosylmethionine decarboxylase proenzyme (130 aa).

S63 functions as the Schiff-base intermediate with substrate; via pyruvic acid in the catalytic mechanism. Position 63 is a pyruvic acid (Ser); by autocatalysis (S63). H68 (proton acceptor; for processing activity) is an active-site residue. C83 functions as the Proton donor; for catalytic activity in the catalytic mechanism.

It belongs to the prokaryotic AdoMetDC family. Type 1 subfamily. Heterotetramer of two alpha and two beta chains arranged as a dimer of alpha/beta heterodimers. Pyruvate is required as a cofactor. In terms of processing, is synthesized initially as an inactive proenzyme. Formation of the active enzyme involves a self-maturation process in which the active site pyruvoyl group is generated from an internal serine residue via an autocatalytic post-translational modification. Two non-identical subunits are generated from the proenzyme in this reaction, and the pyruvate is formed at the N-terminus of the alpha chain, which is derived from the carboxyl end of the proenzyme. The post-translation cleavage follows an unusual pathway, termed non-hydrolytic serinolysis, in which the side chain hydroxyl group of the serine supplies its oxygen atom to form the C-terminus of the beta chain, while the remainder of the serine residue undergoes an oxidative deamination to produce ammonia and the pyruvoyl group blocking the N-terminus of the alpha chain.

The catalysed reaction is S-adenosyl-L-methionine + H(+) = S-adenosyl 3-(methylsulfanyl)propylamine + CO2. Its pathway is amine and polyamine biosynthesis; S-adenosylmethioninamine biosynthesis; S-adenosylmethioninamine from S-adenosyl-L-methionine: step 1/1. In terms of biological role, catalyzes the decarboxylation of S-adenosylmethionine to S-adenosylmethioninamine (dcAdoMet), the propylamine donor required for the synthesis of the polyamines spermine and spermidine from the diamine putrescine. The sequence is that of S-adenosylmethionine decarboxylase proenzyme from Thermosipho africanus (strain TCF52B).